The following is a 422-amino-acid chain: Probable zinc-type alcohol dehydrogenase-like protein L498 (422 aa).

Residues cysteine 108, histidine 129, cysteine 160, cysteine 163, cysteine 166, cysteine 174, and cysteine 231 each contribute to the Zn(2+) site.

The cofactor is Zn(2+).

Its subcellular location is the host cytoplasm. It is found in the virion. The protein is Probable zinc-type alcohol dehydrogenase-like protein L498 of Acanthamoeba polyphaga (Amoeba).